Reading from the N-terminus, the 95-residue chain is Small ubiquitin-related modifier 2-A (95 aa).

A Glycyl lysine isopeptide (Lys-Gly) (interchain with G-Cter in SUMO) cross-link involves residue K11. A Ubiquitin-like domain is found at 16 to 95 (DHINLKVAGQ…VFQQQTGGSF (80 aa)). G93 is covalently cross-linked (Glycyl lysine isopeptide (Gly-Lys) (interchain with K-? in acceptor proteins)). The propeptide occupies 94–95 (SF).

This sequence belongs to the ubiquitin family. SUMO subfamily. In terms of assembly, interacts with sae2 and ube2i. Covalently attached to a number of proteins, including top2. Post-translationally, polymeric chains can be formed through Lys-11 cross-linking. Cleavage of precursor form by a sentrin-specific protease is necessary for function.

Its subcellular location is the nucleus. Ubiquitin-like protein that can be covalently attached to proteins as a monomer or as a lysine-linked polymer. Covalent attachment via an isopeptide bond to its substrates requires prior activation by the E1 complex sae1-sae2 and linkage to the E2 enzyme ube2i, and can be promoted by an E3 ligase such as pias1-4. This post-translational modification on lysine residues of proteins plays a crucial role in a number of cellular processes such as nuclear transport, DNA replication and repair, mitosis and signal transduction. Polymeric sumo2 chains are also susceptible to polyubiquitination which functions as a signal for proteasomal degradation of modified proteins. This is Small ubiquitin-related modifier 2-A (sumo2-a) from Xenopus laevis (African clawed frog).